Consider the following 336-residue polypeptide: Anthranilate phosphoribosyltransferase (336 aa).

5-phospho-alpha-D-ribose 1-diphosphate is bound by residues Gly79, 82 to 83, Thr87, 89 to 92, 107 to 115, and Ala119; these read GD, NIST, and KHGNRCVSS. Gly79 contributes to the anthranilate binding site. Residue Ser91 participates in Mg(2+) binding. Anthranilate is bound at residue Asn110. Arg165 is an anthranilate binding site. Asp224 and Glu225 together coordinate Mg(2+).

Belongs to the anthranilate phosphoribosyltransferase family. In terms of assembly, homodimer. Requires Mg(2+) as cofactor.

It carries out the reaction N-(5-phospho-beta-D-ribosyl)anthranilate + diphosphate = 5-phospho-alpha-D-ribose 1-diphosphate + anthranilate. It functions in the pathway amino-acid biosynthesis; L-tryptophan biosynthesis; L-tryptophan from chorismate: step 2/5. Its function is as follows. Catalyzes the transfer of the phosphoribosyl group of 5-phosphorylribose-1-pyrophosphate (PRPP) to anthranilate to yield N-(5'-phosphoribosyl)-anthranilate (PRA). This chain is Anthranilate phosphoribosyltransferase, found in Lachnoclostridium phytofermentans (strain ATCC 700394 / DSM 18823 / ISDg) (Clostridium phytofermentans).